The sequence spans 161 residues: Pleiotrophin-B (161 aa).

The signal sequence occupies residues 1–23; it reads MHHQHGLFMLALLAFLLVMTVLG. 5 disulfide bridges follow: Cys-41–Cys-70, Cys-49–Cys-79, Cys-56–Cys-83, Cys-93–Cys-125, and Cys-103–Cys-135. Chondroitin sulfate binding regions lie at residues 86–93 and 117–125; these read KKQFGAEC and KRALHNAEC. The segment at 136–161 is disordered; it reads GKVTKPKLQESKKKKKEGKNKEKLLD. A chondroitin sulfate A binding region spans residues 141–161; that stretch reads PKLQESKKKKKEGKNKEKLLD.

It belongs to the pleiotrophin family. As to expression, expressed in high levels in brain and eye. Lower levels in bone. In the tailbud embryo stage, it is expressed exclusively in the central nervous system, especially in the hind region of the brain.

Its subcellular location is the secreted. In terms of biological role, secreted growth factor that mediates its signal through cell-surface proteoglycan and non-proteoglycan receptors. Binds cell-surface proteoglycan receptor via their chondroitin sulfate (CS) groups. Thereby regulates many processes like cell proliferation, cell survival, cell growth, cell differentiation and cell migration. Has antibacterial activity against both Gram-positive and Gram-negative bacteria. The sequence is that of Pleiotrophin-B (ptn-b) from Xenopus laevis (African clawed frog).